A 75-amino-acid chain; its full sequence is UPF0729 protein C18orf32 homolog (75 aa).

Positions 1 to 37 are necessary for its localzation to the endoplasmic reticulum and lipid droplets; that stretch reads MVCIPCIVIPVLLWVYKRFLEPVLYPIISPIISRFWR. Residues 43–65 show a composition bias toward polar residues; the sequence is DTPQQKTSTAECNGAANGSTANG. The interval 43 to 75 is disordered; sequence DTPQQKTSTAECNGAANGSTANGPKTVADKKAD.

Belongs to the UPF0729 family.

The protein resides in the endoplasmic reticulum. It is found in the lipid droplet. The protein is UPF0729 protein C18orf32 homolog of Danio rerio (Zebrafish).